Here is a 61-residue protein sequence, read N- to C-terminus: Small ribosomal subunit protein uS14 (61 aa).

Zn(2+) is bound by residues C24, C27, C40, and C43.

It belongs to the universal ribosomal protein uS14 family. Zinc-binding uS14 subfamily. In terms of assembly, part of the 30S ribosomal subunit. Contacts proteins S3 and S10. It depends on Zn(2+) as a cofactor.

Binds 16S rRNA, required for the assembly of 30S particles and may also be responsible for determining the conformation of the 16S rRNA at the A site. This is Small ribosomal subunit protein uS14 from Chloroflexus aurantiacus (strain ATCC 29364 / DSM 637 / Y-400-fl).